The following is a 115-amino-acid chain: NAD(P)H-quinone oxidoreductase subunit M (115 aa).

It belongs to the complex I NdhM subunit family. In terms of assembly, NDH-1 can be composed of about 15 different subunits; different subcomplexes with different compositions have been identified which probably have different functions.

Its subcellular location is the cellular thylakoid membrane. It catalyses the reaction a plastoquinone + NADH + (n+1) H(+)(in) = a plastoquinol + NAD(+) + n H(+)(out). The enzyme catalyses a plastoquinone + NADPH + (n+1) H(+)(in) = a plastoquinol + NADP(+) + n H(+)(out). In terms of biological role, NDH-1 shuttles electrons from an unknown electron donor, via FMN and iron-sulfur (Fe-S) centers, to quinones in the respiratory and/or the photosynthetic chain. The immediate electron acceptor for the enzyme in this species is believed to be plastoquinone. Couples the redox reaction to proton translocation, and thus conserves the redox energy in a proton gradient. Cyanobacterial NDH-1 also plays a role in inorganic carbon-concentration. The sequence is that of NAD(P)H-quinone oxidoreductase subunit M from Prochlorococcus marinus (strain MIT 9515).